The primary structure comprises 400 residues: Queuine tRNA-ribosyltransferase catalytic subunit (400 aa).

Catalysis depends on aspartate 89, which acts as the Proton acceptor. Residues 89–93 (DSGGF), aspartate 143, glutamine 185, and glycine 212 contribute to the substrate site. Residues 243 to 249 (GVGFPVD) form an RNA binding region. Aspartate 262 acts as the Nucleophile in catalysis. The tract at residues 267–271 (TRTAR) is RNA binding; important for wobble base 34 recognition. Residues cysteine 301, cysteine 303, cysteine 306, and histidine 331 each coordinate Zn(2+).

It belongs to the queuine tRNA-ribosyltransferase family. In terms of assembly, heterodimer of a catalytic subunit and an accessory subunit. It depends on Zn(2+) as a cofactor.

It is found in the cytoplasm. The enzyme catalyses guanosine(34) in tRNA + queuine = queuosine(34) in tRNA + guanine. Its function is as follows. Catalytic subunit of the queuine tRNA-ribosyltransferase (TGT) that catalyzes the base-exchange of a guanine (G) residue with queuine (Q) at position 34 (anticodon wobble position) in tRNAs with GU(N) anticodons (tRNA-Asp, -Asn, -His and -Tyr), resulting in the hypermodified nucleoside queuosine (7-(((4,5-cis-dihydroxy-2-cyclopenten-1-yl)amino)methyl)-7-deazaguanosine). Catalysis occurs through a double-displacement mechanism. The nucleophile active site attacks the C1' of nucleotide 34 to detach the guanine base from the RNA, forming a covalent enzyme-RNA intermediate. The proton acceptor active site deprotonates the incoming queuine, allowing a nucleophilic attack on the C1' of the ribose to form the product. This is Queuine tRNA-ribosyltransferase catalytic subunit from Caenorhabditis briggsae.